We begin with the raw amino-acid sequence, 105 residues long: Large ribosomal subunit protein uL24 (105 aa).

This sequence belongs to the universal ribosomal protein uL24 family. As to quaternary structure, part of the 50S ribosomal subunit.

In terms of biological role, one of two assembly initiator proteins, it binds directly to the 5'-end of the 23S rRNA, where it nucleates assembly of the 50S subunit. Its function is as follows. One of the proteins that surrounds the polypeptide exit tunnel on the outside of the subunit. The sequence is that of Large ribosomal subunit protein uL24 from Vibrio atlanticus (strain LGP32) (Vibrio splendidus (strain Mel32)).